The following is a 652-amino-acid chain: Sodium-dependent phosphate transporter 2 (652 aa).

Residues 1-5 are Extracellular-facing; the sequence is MAMDE. The chain crosses the membrane as a helical span at residues 6 to 26; the sequence is YLWMVILGFIIAFILAFSVGA. Residues 27–46 are Cytoplasmic-facing; the sequence is NDVANSFGTAVGSGVVTLRQ. The helical transmembrane segment at 47 to 67 threads the bilayer; sequence ACILASIFETTGSVLLGAKVG. Residues 68 to 86 are Extracellular-facing; it reads ETIRKGIIDVNLYNETVET. N-linked (GlcNAc...) asparagine glycosylation occurs at asparagine 81. A helical transmembrane segment spans residues 87-107; it reads LMAGEVSAMVGSAVWQLIASF. Over 108–109 the chain is Cytoplasmic; sequence LR. The chain crosses the membrane as a helical span at residues 110 to 130; the sequence is LPISGTHCIVGSTIGFSLVAI. Over 131–142 the chain is Extracellular; the sequence is GTKGVQWMELVK. The chain crosses the membrane as a helical span at residues 143–163; it reads IVASWFISPLLSGFMSGLLFV. The Cytoplasmic segment spans residues 164 to 190; the sequence is LIRIFILKKEDPVPNGLRALPVFYAAT. The helical transmembrane segment at 191 to 211 threads the bilayer; it reads IAINVFSIMYTGAPVLGLVLP. The Extracellular portion of the chain corresponds to 212–213; sequence MW. The helical transmembrane segment at 214–234 threads the bilayer; that stretch reads AIALISFGVALLFAFFVWLFV. The Cytoplasmic portion of the chain corresponds to 235–482; that stretch reads CPWMRRKITG…EEKEEKDAPE (248 aa). Phosphoserine is present on residues serine 253, serine 256, serine 259, and serine 268. The disordered stretch occupies residues 273–307; that stretch reads ELPGAKANDDSTIPLTGAAGETLGTSEGTSAGSHP. A compositionally biased stretch (polar residues) spans 295 to 304; the sequence is LGTSEGTSAG. 2 positions are modified to phosphoserine: serine 316 and serine 385. The interval 458 to 477 is disordered; that stretch reads SELADPDQPREDPAEEEKEE. The chain crosses the membrane as a helical span at residues 483–503; the sequence is VHLLFHFLQVLTACFGSFAHG. Over 504–530 the chain is Extracellular; that stretch reads GNDVSNAIGPLVALWLIYKQGGVTQEA. The helical transmembrane segment at 531–551 threads the bilayer; it reads ATPVWLLFYGGVGICTGLWVW. The Cytoplasmic portion of the chain corresponds to 552 to 571; that stretch reads GRRVIQTMGKDLTPITPSSG. The chain crosses the membrane as a helical span at residues 572-586; it reads FTIELASAFTVVIAS. The Extracellular portion of the chain corresponds to 587 to 593; that stretch reads NIGLPVS. The helical transmembrane segment at 594–609 threads the bilayer; it reads TTHCKVGSVVAVGWIR. Over 610 to 621 the chain is Cytoplasmic; that stretch reads SRKAVDWRLFRN. Residues 622–642 form a helical membrane-spanning segment; the sequence is IFVAWFVTVPVAGLFSAAVMA. Topologically, residues 643 to 652 are extracellular; it reads LLMYGILPYV.

The protein belongs to the inorganic phosphate transporter (PiT) (TC 2.A.20) family. Homodimer. In terms of tissue distribution, ubiquitously expressed.

The protein localises to the cell membrane. It localises to the apical cell membrane. The catalysed reaction is 2 Na(+)(out) + phosphate(out) = 2 Na(+)(in) + phosphate(in). Functionally, sodium-phosphate symporter which preferentially transports the monovalent form of phosphate with a stoichiometry of two sodium ions per phosphate ion. Plays a critical role in the determination of bone quality and strength by providing phosphate for bone mineralization. Required to maintain normal cerebrospinal fluid phosphate levels. Mediates phosphate-induced calcification of vascular smooth muscle cells (VCMCs) and can functionally compensate for loss of SLC20A1 in VCMCs. In terms of biological role, (Microbial infection) Functions as a retroviral receptor and confers human cells susceptibility to infection to amphotropic murine leukemia virus (A-MuLV), 10A1 murine leukemia virus (10A1 MLV) and some feline leukemia virus subgroup B (FeLV-B) variants. The chain is Sodium-dependent phosphate transporter 2 (SLC20A2) from Homo sapiens (Human).